The primary structure comprises 151 residues: Pollen allergen Sal k 5.0101 (151 aa).

Cystine bridges form between Cys17-Cys88, Cys20-Cys132, and Cys41-Cys76. Asn43 carries an N-linked (GlcNAc...) asparagine glycan.

Belongs to the Ole e I family. In terms of processing, N-glycosylated. Contains fucose monosaccharides in the glycan structure. Expressed in pollen (at protein level).

It localises to the secreted. This Kali turgidum (Prickly saltwort) protein is Pollen allergen Sal k 5.0101.